A 144-amino-acid polypeptide reads, in one-letter code: Actin-associated protein FAM107A (144 aa).

Residues 66–112 (ELQRVLEHRRRNQLIKKKKEELEAKRLQCPFEQELLRRQQRLNQLEK) are a coiled coil. Positions 74–84 (RRRNQLIKKKK) match the Nuclear localization signal motif. The tract at residues 105-124 (QRLNQLEKPPEKEEDHAPEF) is disordered. Over residues 112–124 (KPPEKEEDHAPEF) the composition is skewed to basic and acidic residues.

It belongs to the FAM107 family. Interacts with ACTB. Interacts with COMMD1; this interaction stabilizes COMMD1 in the nucleus. Interacts with MAP1A. Interacts with PRDX1. Interacts with F-actin. As to expression, widely expressed. Expressed in neurons. Expressed in malignant glial tumors. Expression is reduced or absent in a number of cancer cell lines.

Its subcellular location is the nucleus. It localises to the cytoplasm. The protein localises to the cytoskeleton. The protein resides in the stress fiber. It is found in the cell junction. Its subcellular location is the focal adhesion. It localises to the cell projection. The protein localises to the ruffle membrane. The protein resides in the synapse. Stress-inducible actin-binding protein that plays a role in synaptic and cognitive functions by modulating actin filamentous (F-actin) dynamics. Mediates polymerization of globular actin to F-actin. Also binds to, stabilizes and bundles F-actin. Involved in synaptic function by regulating neurite outgrowth in an actin-dependent manner and for the acquisition of hippocampus-dependent cognitive function, such as learning and long-term memory. Plays a role in the actin and microtubule cytoskeleton organization; negatively regulates focal adhesion (FA) assembly promoting malignant glial cell migration in an actin-, microtubule- and MAP1A-dependent manner. Also involved in neuroblastoma G1/S phase cell cycle progression and cell proliferation inhibition by stimulating ubiquitination of NF-kappa-B subunit RELA and NF-kappa-B degradation in a COMMD1- and actin-dependent manner. May play a role in tumor development. This Homo sapiens (Human) protein is Actin-associated protein FAM107A.